We begin with the raw amino-acid sequence, 323 residues long: Transmembrane protein 171 (323 aa).

4 helical membrane passes run 22–42 (IFFLFVFGAVLLCVGVLISIF), 57–77 (MVLKIAGPSCAVMGLGTVILA), 112–132 (LIFGFLFLTSGMLISILGIWV), and 159–179 (FLSLQIMGPLIVLVGLCFFVV). Positions 251–268 (YSSLFNLSRTPTPENQGA) are enriched in polar residues. Residues 251–323 (YSSLFNLSRT…LGAPSESSPP (73 aa)) are disordered. Low complexity predominate over residues 281–290 (SGPGSSSESS).

Its subcellular location is the membrane. In Rattus norvegicus (Rat), this protein is Transmembrane protein 171 (Tmem171).